We begin with the raw amino-acid sequence, 664 residues long: DNA ligase (664 aa).

NAD(+) is bound by residues 34-38 (DAEYD), 83-84 (SL), and Glu114. Lys116 serves as the catalytic N6-AMP-lysine intermediate. Positions 137, 172, 288, and 312 each coordinate NAD(+). Cys406, Cys409, Cys424, and Cys429 together coordinate Zn(2+). The BRCT domain occupies 586–664 (VRDNRLEGLT…EEEFRQMVMS (79 aa)).

This sequence belongs to the NAD-dependent DNA ligase family. LigA subfamily. Mg(2+) serves as cofactor. Mn(2+) is required as a cofactor.

It carries out the reaction NAD(+) + (deoxyribonucleotide)n-3'-hydroxyl + 5'-phospho-(deoxyribonucleotide)m = (deoxyribonucleotide)n+m + AMP + beta-nicotinamide D-nucleotide.. Functionally, DNA ligase that catalyzes the formation of phosphodiester linkages between 5'-phosphoryl and 3'-hydroxyl groups in double-stranded DNA using NAD as a coenzyme and as the energy source for the reaction. It is essential for DNA replication and repair of damaged DNA. The chain is DNA ligase from Carboxydothermus hydrogenoformans (strain ATCC BAA-161 / DSM 6008 / Z-2901).